Reading from the N-terminus, the 331-residue chain is MQKFLSLIIVILILYNIVKLKISPDNNNPTTIEQTASNNSSTDENQTSINNEPHISLNGNLFERTVSKIVINALKTEEGKAFFENILQPLNGPINPNDYTIEVRKDLVKTLFKINTLGSGNIGPASCGHVVTVFYQISDMNNTLISEDTKTFTLGSAPVMLGLDNVIIGMMVGEAREAIIPAKYAVNNSKNIIFDDAYNYKVNVILKSILPQNFVKNNEVKIYDDEIAYRVPLLCGEKVSFNAKITRLSNGKILYDSKAKGQQIDMKIGDITYPLIFSYALQGKVTVGTRSVIAEGKTFKALGSNINKIISHESLPINEYLLLELGDFKQN.

Residues 28-50 are disordered; it reads NPTTIEQTASNNSSTDENQTSIN. The 99-residue stretch at 128 to 226 folds into the PPIase FKBP-type domain; sequence GHVVTVFYQI…NNEVKIYDDE (99 aa).

The catalysed reaction is [protein]-peptidylproline (omega=180) = [protein]-peptidylproline (omega=0). The chain is Putative peptidyl-prolyl cis-trans isomerase RF_0616 from Rickettsia felis (strain ATCC VR-1525 / URRWXCal2) (Rickettsia azadi).